The following is a 78-amino-acid chain: Large ribosomal subunit protein bL28 (78 aa).

Residues 1–31 (MAAHCQVTGAEPGFGHSISHSHRRNKRRFDP) form a disordered region.

Belongs to the bacterial ribosomal protein bL28 family.

The sequence is that of Large ribosomal subunit protein bL28 from Pseudarthrobacter chlorophenolicus (strain ATCC 700700 / DSM 12829 / CIP 107037 / JCM 12360 / KCTC 9906 / NCIMB 13794 / A6) (Arthrobacter chlorophenolicus).